Here is a 156-residue protein sequence, read N- to C-terminus: 6,7-dimethyl-8-ribityllumazine synthase (156 aa).

5-amino-6-(D-ribitylamino)uracil contacts are provided by residues Phe-25, 59–61 (AWE), and 83–85 (AVI). Residue 88–89 (ST) coordinates (2S)-2-hydroxy-3-oxobutyl phosphate. Catalysis depends on His-91, which acts as the Proton donor. Asn-116 provides a ligand contact to 5-amino-6-(D-ribitylamino)uracil. Arg-130 provides a ligand contact to (2S)-2-hydroxy-3-oxobutyl phosphate.

The protein belongs to the DMRL synthase family. As to quaternary structure, forms an icosahedral capsid composed of 60 subunits, arranged as a dodecamer of pentamers.

The catalysed reaction is (2S)-2-hydroxy-3-oxobutyl phosphate + 5-amino-6-(D-ribitylamino)uracil = 6,7-dimethyl-8-(1-D-ribityl)lumazine + phosphate + 2 H2O + H(+). Its pathway is cofactor biosynthesis; riboflavin biosynthesis; riboflavin from 2-hydroxy-3-oxobutyl phosphate and 5-amino-6-(D-ribitylamino)uracil: step 1/2. Its function is as follows. Catalyzes the formation of 6,7-dimethyl-8-ribityllumazine by condensation of 5-amino-6-(D-ribitylamino)uracil with 3,4-dihydroxy-2-butanone 4-phosphate. This is the penultimate step in the biosynthesis of riboflavin. This Acinetobacter baylyi (strain ATCC 33305 / BD413 / ADP1) protein is 6,7-dimethyl-8-ribityllumazine synthase.